Reading from the N-terminus, the 328-residue chain is Twinfilin (328 aa).

Positions 1–137 (MSASVELKPT…DYQQIMKSLS (137 aa)) constitute an ADF-H 1 domain. A Phosphoserine modification is found at serine 143. One can recognise an ADF-H 2 domain in the interval 173 to 304 (GVAMSIDDKA…TEKEILHAAG (132 aa)). The tract at residues 302 to 328 (AAGISSPQAETSTTKTGFSRPRPPRRR) is disordered. Over residues 306-318 (SSPQAETSTTKTG) the composition is skewed to polar residues.

Belongs to the actin-binding proteins ADF family. Twinfilin subfamily. Interacts with G-actin; ADP-actin form.

It is found in the cytoplasm. It localises to the cytoskeleton. Actin-binding protein involved in motile and morphological processes. Inhibits actin polymerization, likely by sequestering G-actin. Prevents actin filament assembly by forming a 1:1 complex with actin monomers, and inhibits the nucleotide exchange reaction of actin monomers. The protein is Twinfilin (twf1) of Schizosaccharomyces pombe (strain 972 / ATCC 24843) (Fission yeast).